The following is a 109-amino-acid chain: Large ribosomal subunit protein uL22 (109 aa).

This sequence belongs to the universal ribosomal protein uL22 family. As to quaternary structure, part of the 50S ribosomal subunit.

In terms of biological role, this protein binds specifically to 23S rRNA; its binding is stimulated by other ribosomal proteins, e.g. L4, L17, and L20. It is important during the early stages of 50S assembly. It makes multiple contacts with different domains of the 23S rRNA in the assembled 50S subunit and ribosome. Its function is as follows. The globular domain of the protein is located near the polypeptide exit tunnel on the outside of the subunit, while an extended beta-hairpin is found that lines the wall of the exit tunnel in the center of the 70S ribosome. The protein is Large ribosomal subunit protein uL22 of Bordetella petrii (strain ATCC BAA-461 / DSM 12804 / CCUG 43448).